The following is a 1339-amino-acid chain: Transcription factor tau subunit sfc3 (1339 aa).

The interval 470-515 (MESNAEVSPDGMTLLPRKRGRPRKSANISVTSSPIRPSKNENNLPS) is disordered. The segment at residues 485–497 (PRKRGRPRKSANI) is a DNA-binding region (a.T hook). Positions 495–514 (ANISVTSSPIRPSKNENNLP) are enriched in polar residues. A phosphoserine mark is found at Ser595 and Ser596. A disordered region spans residues 791–826 (RRKSMPAEIKRHKESSETKPVDKEEVKKNEKEKDDP). Basic and acidic residues predominate over residues 798 to 826 (EIKRHKESSETKPVDKEEVKKNEKEKDDP).

As to quaternary structure, component of the TFIIIC complex including sfc1, sfc3, sfc4, sfc6 and sfc7. The subunits are organized in two globular domains, tauA and tauB, connected by a proteolysis-sensitive and flexible linker. Interacts with sfc1, sfc4 and sfc6.

It localises to the nucleus envelope. TFIIIC mediates tRNA and 5S RNA gene activation by binding to intragenic promoter elements. Upstream of the transcription start site, TFIIIC assembles the initiation complex TFIIIB-TFIIIC-tDNA, which is sufficient for RNA polymerase III recruitment and function. Part of the tauB domain of TFIIIC that binds boxB DNA promoter sites of tRNA and similar genes. Cooperates with sfc6 in DNA binding. Localizes to chromatin insulator sequence without recruiting RNA polymerase III and plays a role in nuclear organization. This is Transcription factor tau subunit sfc3 from Schizosaccharomyces pombe (strain 972 / ATCC 24843) (Fission yeast).